The chain runs to 878 residues: Serine/threonine-protein kinase N3 (878 aa).

3 REM-1 domains span residues Glu-2–Leu-77, Ser-86–Pro-165, and Pro-169–Pro-238. Residue Ser-164 is modified to Phosphoserine. Residues Pro-461–Asp-525 form a disordered region. Residues Phe-548–Phe-807 enclose the Protein kinase domain. ATP contacts are provided by residues Leu-554–Val-562 and Lys-577. Asp-673 acts as the Proton acceptor in catalysis. Thr-707, Thr-711, and Thr-849 each carry phosphothreonine. Residues Arg-808 to Ser-878 form the AGC-kinase C-terminal domain.

Belongs to the protein kinase superfamily. AGC Ser/Thr protein kinase family. PKC subfamily. Post-translationally, autophosphorylated.

It is found in the nucleus. It localises to the cytoplasm. The protein localises to the perinuclear region. The catalysed reaction is L-seryl-[protein] + ATP = O-phospho-L-seryl-[protein] + ADP + H(+). It carries out the reaction L-threonyl-[protein] + ATP = O-phospho-L-threonyl-[protein] + ADP + H(+). Its activity is regulated as follows. Two specific sites, Thr-707 (activation loop of the kinase domain) and Thr-849 (turn motif), need to be phosphorylated for its full activation. Its function is as follows. Contributes to invasiveness in malignant prostate cancer. The chain is Serine/threonine-protein kinase N3 (Pkn3) from Mus musculus (Mouse).